Here is a 513-residue protein sequence, read N- to C-terminus: HMG box-containing protein 1 (513 aa).

The interval 151-181 (RPPPVSSAKSGPAFPHDHWKEETPVRHERAN) is disordered. A compositionally biased stretch (basic and acidic residues) spans 165-181 (PHDHWKEETPVRHERAN). An AXH domain is found at 202–343 (WCNSWPSTVW…PPGHPDAINF (142 aa)). The HMG box DNA-binding region spans 433 to 501 (CKRPMNAFML…EQKRLNPDCW (69 aa)).

Binds TCF4. Binds RB1. Binds the second PAH repeat of SIN3A. Ubiquitinated by the CTLH E3 ubiquitin-protein ligase complex, leading to subsequent proteasomal degradation. As to expression, highly expressed in liver, adipose tissue, lung, brain, spleen, kidney, skeletal muscle and heart.

The protein resides in the nucleus. In terms of biological role, transcriptional repressor that binds to the promoter region of target genes. Plays a role in the regulation of the cell cycle and of the Wnt pathway. Binds preferentially to the sequence 5'-TTCATTCATTCA-3'. Binding to the histone H1.0 promoter is enhanced by interaction with RB1. Disrupts the interaction between DNA and TCF4. This Rattus norvegicus (Rat) protein is HMG box-containing protein 1 (Hbp1).